A 118-amino-acid polypeptide reads, in one-letter code: Large ribosomal subunit protein bL20 (118 aa).

The protein belongs to the bacterial ribosomal protein bL20 family.

Binds directly to 23S ribosomal RNA and is necessary for the in vitro assembly process of the 50S ribosomal subunit. It is not involved in the protein synthesizing functions of that subunit. This is Large ribosomal subunit protein bL20 from Agathobacter rectalis (strain ATCC 33656 / DSM 3377 / JCM 17463 / KCTC 5835 / VPI 0990) (Eubacterium rectale).